We begin with the raw amino-acid sequence, 326 residues long: N-acetyl-gamma-glutamyl-phosphate reductase (326 aa).

Cysteine 155 is a catalytic residue.

This sequence belongs to the NAGSA dehydrogenase family. Type 1 subfamily.

Its subcellular location is the cytoplasm. It carries out the reaction N-acetyl-L-glutamate 5-semialdehyde + phosphate + NADP(+) = N-acetyl-L-glutamyl 5-phosphate + NADPH + H(+). It participates in amino-acid biosynthesis; L-arginine biosynthesis; N(2)-acetyl-L-ornithine from L-glutamate: step 3/4. In terms of biological role, catalyzes the NADPH-dependent reduction of N-acetyl-5-glutamyl phosphate to yield N-acetyl-L-glutamate 5-semialdehyde. The sequence is that of N-acetyl-gamma-glutamyl-phosphate reductase from Shewanella baltica (strain OS185).